We begin with the raw amino-acid sequence, 198 residues long: UPF0548 protein DR_2035 (198 aa).

This sequence belongs to the UPF0548 family.

The chain is UPF0548 protein DR_2035 from Deinococcus radiodurans (strain ATCC 13939 / DSM 20539 / JCM 16871 / CCUG 27074 / LMG 4051 / NBRC 15346 / NCIMB 9279 / VKM B-1422 / R1).